We begin with the raw amino-acid sequence, 178 residues long: Ras-like protein (178 aa).

GTP is bound at residue 1-6; it reads GGVGKS. The Effector region signature appears at 21 to 29; sequence YDPTIEDSY. Residues 46 to 50 and 105 to 108 contribute to the GTP site; these read DTAGQ and NKCD. At cysteine 175 the chain carries Cysteine methyl ester. Cysteine 175 carries S-geranylgeranyl cysteine lipidation. Positions 176–178 are cleaved as a propeptide — removed in mature form; sequence SIL.

It belongs to the small GTPase superfamily. Ras family.

It localises to the cell membrane. The catalysed reaction is GTP + H2O = GDP + phosphate + H(+). Its activity is regulated as follows. Alternates between an inactive form bound to GDP and an active form bound to GTP. Activated by a guanine nucleotide-exchange factor (GEF) and inactivated by a GTPase-activating protein (GAP). In terms of biological role, ras proteins bind GDP/GTP and possess intrinsic GTPase activity. The protein is Ras-like protein of Artemia salina (Brine shrimp).